Consider the following 926-residue polypeptide: Taz1-interacting factor 1 (926 aa).

Coiled coils occupy residues 461-496 (REAV…SHQN) and 548-671 (SFTD…LKQK). Ser548 carries the post-translational modification Phosphoserine. Thr550 is modified (phosphothreonine). At Ser552 the chain carries Phosphoserine.

The protein belongs to the ATG11 family. As to quaternary structure, homodimer and potential homooligomers. Interacts with taz1.

The protein resides in the preautophagosomal structure membrane. It is found in the vacuole membrane. In terms of biological role, involved in cytoplasm to vacuole transport (Cvt), pexophagy, mitophagy and nucleophagy. Recruits mitochondria for their selective degradation via autophagy (mitophagy) during starvation. Works as scaffold proteins that recruit ATG proteins to the preautophagosome (PAS), the site of vesicle/autophagosome formation. Required for atg9 anterograde transport from the mitochondria to the PAS. Required for nitrogen starvation-induced sexual development and for entering the dormant G0 state. This Schizosaccharomyces pombe (strain 972 / ATCC 24843) (Fission yeast) protein is Taz1-interacting factor 1 (taf1).